Here is a 263-residue protein sequence, read N- to C-terminus: Shikimate dehydrogenase (NADP(+)) (263 aa).

Shikimate contacts are provided by residues 21–23 (TLS) and Thr-67. Lys-71 serves as the catalytic Proton acceptor. Position 83 (Glu-83) interacts with NADP(+). Residues Asn-92 and Asp-103 each coordinate shikimate. Residues 126–130 (GAGGA) and Leu-204 each bind NADP(+). Tyr-206 is a shikimate binding site. Gly-227 lines the NADP(+) pocket.

It belongs to the shikimate dehydrogenase family. Homodimer.

The enzyme catalyses shikimate + NADP(+) = 3-dehydroshikimate + NADPH + H(+). Its pathway is metabolic intermediate biosynthesis; chorismate biosynthesis; chorismate from D-erythrose 4-phosphate and phosphoenolpyruvate: step 4/7. Involved in the biosynthesis of the chorismate, which leads to the biosynthesis of aromatic amino acids. Catalyzes the reversible NADPH linked reduction of 3-dehydroshikimate (DHSA) to yield shikimate (SA). In Sulfolobus acidocaldarius (strain ATCC 33909 / DSM 639 / JCM 8929 / NBRC 15157 / NCIMB 11770), this protein is Shikimate dehydrogenase (NADP(+)).